The following is a 242-amino-acid chain: 4-hydroxy-tetrahydrodipicolinate reductase (242 aa).

NAD(+)-binding positions include 8–13, 75–77, and 99–102; these read GSNGRM, GTT, and ATNM. His-131 (proton donor/acceptor) is an active-site residue. A (S)-2,3,4,5-tetrahydrodipicolinate-binding site is contributed by His-132. The active-site Proton donor is the Lys-135. 141–142 is a (S)-2,3,4,5-tetrahydrodipicolinate binding site; that stretch reads GT.

It belongs to the DapB family.

The protein resides in the cytoplasm. The enzyme catalyses (S)-2,3,4,5-tetrahydrodipicolinate + NAD(+) + H2O = (2S,4S)-4-hydroxy-2,3,4,5-tetrahydrodipicolinate + NADH + H(+). It carries out the reaction (S)-2,3,4,5-tetrahydrodipicolinate + NADP(+) + H2O = (2S,4S)-4-hydroxy-2,3,4,5-tetrahydrodipicolinate + NADPH + H(+). Its pathway is amino-acid biosynthesis; L-lysine biosynthesis via DAP pathway; (S)-tetrahydrodipicolinate from L-aspartate: step 4/4. Its function is as follows. Catalyzes the conversion of 4-hydroxy-tetrahydrodipicolinate (HTPA) to tetrahydrodipicolinate. This Campylobacter lari (strain RM2100 / D67 / ATCC BAA-1060) protein is 4-hydroxy-tetrahydrodipicolinate reductase.